The primary structure comprises 292 residues: Ribosomal RNA small subunit methyltransferase A (292 aa).

Residues asparagine 28, leucine 30, glycine 55, glutamate 76, aspartate 101, and asparagine 126 each coordinate S-adenosyl-L-methionine.

Belongs to the class I-like SAM-binding methyltransferase superfamily. rRNA adenine N(6)-methyltransferase family. RsmA subfamily.

The protein resides in the cytoplasm. The catalysed reaction is adenosine(1518)/adenosine(1519) in 16S rRNA + 4 S-adenosyl-L-methionine = N(6)-dimethyladenosine(1518)/N(6)-dimethyladenosine(1519) in 16S rRNA + 4 S-adenosyl-L-homocysteine + 4 H(+). Specifically dimethylates two adjacent adenosines (A1518 and A1519) in the loop of a conserved hairpin near the 3'-end of 16S rRNA in the 30S particle. May play a critical role in biogenesis of 30S subunits. The protein is Ribosomal RNA small subunit methyltransferase A of Bacillus thuringiensis (strain Al Hakam).